Reading from the N-terminus, the 159-residue chain is ATP synthase subunit b 2 (159 aa).

The helical transmembrane segment at 1–21 (MDATFWALVALIIFVGILLYM) threads the bilayer.

It belongs to the ATPase B chain family. In terms of assembly, F-type ATPases have 2 components, F(1) - the catalytic core - and F(0) - the membrane proton channel. F(1) has five subunits: alpha(3), beta(3), gamma(1), delta(1), epsilon(1). F(0) has three main subunits: a(1), b(2) and c(10-14). The alpha and beta chains form an alternating ring which encloses part of the gamma chain. F(1) is attached to F(0) by a central stalk formed by the gamma and epsilon chains, while a peripheral stalk is formed by the delta and b chains.

The protein localises to the cell inner membrane. Its function is as follows. F(1)F(0) ATP synthase produces ATP from ADP in the presence of a proton or sodium gradient. F-type ATPases consist of two structural domains, F(1) containing the extramembraneous catalytic core and F(0) containing the membrane proton channel, linked together by a central stalk and a peripheral stalk. During catalysis, ATP synthesis in the catalytic domain of F(1) is coupled via a rotary mechanism of the central stalk subunits to proton translocation. In terms of biological role, component of the F(0) channel, it forms part of the peripheral stalk, linking F(1) to F(0). The chain is ATP synthase subunit b 2 from Chelativorans sp. (strain BNC1).